A 410-amino-acid polypeptide reads, in one-letter code: Translation initiation factor 2 subunit gamma (410 aa).

The tr-type G domain occupies 6–203 (QSEVNIGMVG…AIQEFIPTPK (198 aa)). The segment at 15 to 22 (GHVDHGKT) is G1. Residues Asp-18, Thr-22, Gly-43, and Ser-45 each contribute to the Mg(2+) site. Residue 18 to 23 (DHGKTS) coordinates GTP. The segment at 43–47 (GISIR) is G2. Cys-58, Cys-61, Cys-73, and Cys-76 together coordinate Zn(2+). The segment at 90–93 (DAPG) is G3. Residues 146-149 (NKID) and 181-183 (SAH) contribute to the GTP site. The tract at residues 146–149 (NKID) is G4. The interval 181–183 (SAH) is G5.

It belongs to the TRAFAC class translation factor GTPase superfamily. Classic translation factor GTPase family. EIF2G subfamily. In terms of assembly, heterotrimer composed of an alpha, a beta and a gamma chain. The cofactor is Mg(2+).

The catalysed reaction is GTP + H2O = GDP + phosphate + H(+). Functionally, eIF-2 functions in the early steps of protein synthesis by forming a ternary complex with GTP and initiator tRNA. In Methanococcus maripaludis (strain C6 / ATCC BAA-1332), this protein is Translation initiation factor 2 subunit gamma.